Here is a 478-residue protein sequence, read N- to C-terminus: Dihydrolipoyl dehydrogenase (478 aa).

FAD contacts are provided by residues glutamate 34–cysteine 49, lysine 58, and glycine 122. Cysteine 49 and cysteine 54 are disulfide-bonded. NAD(+) contacts are provided by residues glycine 188–isoleucine 192, glutamate 211, valine 245, and alanine 276–arginine 279. Residues aspartate 319 and alanine 327 each coordinate FAD. Residue histidine 451 is the Proton acceptor of the active site.

Belongs to the class-I pyridine nucleotide-disulfide oxidoreductase family. Homodimer. It depends on FAD as a cofactor.

It localises to the cytoplasm. The enzyme catalyses N(6)-[(R)-dihydrolipoyl]-L-lysyl-[protein] + NAD(+) = N(6)-[(R)-lipoyl]-L-lysyl-[protein] + NADH + H(+). Its function is as follows. The branched-chain alpha-keto dehydrogenase complex catalyzes the overall conversion of alpha-keto acids to acyl-CoA and CO(2). It contains multiple copies of 3 enzymatic components: branched-chain alpha-keto acid decarboxylase (E1), lipoamide acyltransferase (E2) and lipoamide dehydrogenase (E3). This Pseudomonas fluorescens protein is Dihydrolipoyl dehydrogenase (lpd).